The primary structure comprises 657 residues: Tyrosine-protein phosphatase vhp-1 (657 aa).

The 131-residue stretch at 21–151 (APDTTLVVDC…FAQQYPQLCE (131 aa)) folds into the Rhodanese domain. The Tyrosine-protein phosphatase domain occupies 175–318 (GITLITPNIY…LLEYENVLIK (144 aa)). The active-site Phosphocysteine intermediate is the Cys262. Disordered regions lie at residues 353–426 (SNCV…MDLG), 539–563 (VPAG…SSSA), and 581–657 (PAST…PCHQ). Positions 366-405 (SPSSPSVSEGSAASEPETSSSAASSSSTASAPPSMPSTSE) are enriched in low complexity. Residues 406-419 (QGTSSGTVNVNGKR) show a composition bias toward polar residues. Low complexity-rich tracts occupy residues 542 to 563 (GSSS…SSSA) and 581 to 597 (PAST…TSRA).

This sequence belongs to the protein-tyrosine phosphatase family. Non-receptor class dual specificity subfamily. As to quaternary structure, may interact with pmk-3. Expressed in the pharynx, intestine, neurons and vulval hypodermal cells.

The catalysed reaction is O-phospho-L-tyrosyl-[protein] + H2O = L-tyrosyl-[protein] + phosphate. Its function is as follows. Acts preferentially on the c-Jun N-terminal kinase (JNK) and p38 MAPKs. Plays an important role in the heavy metal stress response and in axon regeneration by negatively regulating the kgb-1 (JNK-like) and the pmk-1 (p38-type) MAPK signaling pathways. This chain is Tyrosine-protein phosphatase vhp-1 (vhp-1), found in Caenorhabditis elegans.